Here is a 298-residue protein sequence, read N- to C-terminus: Acetylglutamate kinase (298 aa).

Substrate is bound by residues 69-70 (GG), Arg91, and Asn196.

Belongs to the acetylglutamate kinase family. ArgB subfamily.

It localises to the cytoplasm. It catalyses the reaction N-acetyl-L-glutamate + ATP = N-acetyl-L-glutamyl 5-phosphate + ADP. It participates in amino-acid biosynthesis; L-arginine biosynthesis; N(2)-acetyl-L-ornithine from L-glutamate: step 2/4. Functionally, catalyzes the ATP-dependent phosphorylation of N-acetyl-L-glutamate. This Granulibacter bethesdensis (strain ATCC BAA-1260 / CGDNIH1) protein is Acetylglutamate kinase.